We begin with the raw amino-acid sequence, 194 residues long: ATP-dependent Clp protease proteolytic subunit (194 aa).

The active-site Nucleophile is the Ser98. Residue His123 is part of the active site.

Belongs to the peptidase S14 family. As to quaternary structure, component of the chloroplastic Clp protease core complex.

It localises to the plastid. The protein resides in the cyanelle. It carries out the reaction Hydrolysis of proteins to small peptides in the presence of ATP and magnesium. alpha-casein is the usual test substrate. In the absence of ATP, only oligopeptides shorter than five residues are hydrolyzed (such as succinyl-Leu-Tyr-|-NHMec, and Leu-Tyr-Leu-|-Tyr-Trp, in which cleavage of the -Tyr-|-Leu- and -Tyr-|-Trp bonds also occurs).. Its function is as follows. Cleaves peptides in various proteins in a process that requires ATP hydrolysis. Has a chymotrypsin-like activity. Plays a major role in the degradation of misfolded proteins. The polypeptide is ATP-dependent Clp protease proteolytic subunit (clpP-A) (Cyanophora paradoxa).